The following is a 397-amino-acid chain: MRRITVLGATGSIGQNTLNVVSRHPDDFQVFALTAHSQISAMAELCVKHNPQYAVMGSYNAAAELKALLGQQTSTQVMYGDQALAEVSSDAEVDVVMAAIVGAAGLSPTLAAIDAGKDVLLANKEALVMSGQLFIDHAQRSGARIIPVDSEHNAIFQCLPQAAQQQVGTMALAEHGIQYLLLTGSGGPFRDIPLEELPQQTPGAACNHPNWSMGRKISVDSATMLNKGLEYIEARWLFNCSRDQLKVVIHPQSVIHSMVQYTDGSVLAQMGEPDMRTPIAHSLGYPERLESGVAGLDFTQIAELTFKQPEAQRYPCLQLAIEACWEGQWATTALNAANEVAVAAFLQEQVGFTDIAKVCDSVLQSIQADEADSLETLLAIDKQARLAANKWLQEYAQ.

6 residues coordinate NADPH: T10, G11, S12, I13, Q38, and N123. 1-deoxy-D-xylulose 5-phosphate is bound at residue K124. Residue E125 coordinates NADPH. D149 provides a ligand contact to Mn(2+). 4 residues coordinate 1-deoxy-D-xylulose 5-phosphate: S150, E151, S185, and H208. A Mn(2+)-binding site is contributed by E151. G214 serves as a coordination point for NADPH. 1-deoxy-D-xylulose 5-phosphate contacts are provided by S221, N226, K227, and E230. Residue E230 coordinates Mn(2+).

It belongs to the DXR family. It depends on Mg(2+) as a cofactor. Mn(2+) serves as cofactor.

It carries out the reaction 2-C-methyl-D-erythritol 4-phosphate + NADP(+) = 1-deoxy-D-xylulose 5-phosphate + NADPH + H(+). The protein operates within isoprenoid biosynthesis; isopentenyl diphosphate biosynthesis via DXP pathway; isopentenyl diphosphate from 1-deoxy-D-xylulose 5-phosphate: step 1/6. Its function is as follows. Catalyzes the NADPH-dependent rearrangement and reduction of 1-deoxy-D-xylulose-5-phosphate (DXP) to 2-C-methyl-D-erythritol 4-phosphate (MEP). This Idiomarina loihiensis (strain ATCC BAA-735 / DSM 15497 / L2-TR) protein is 1-deoxy-D-xylulose 5-phosphate reductoisomerase.